The chain runs to 254 residues: Probable protein S-acyltransferase 15 (254 aa).

2 helical membrane-spanning segments follow: residues 1–21 and 28–48; these read MGFV…GLQS and ALLF…CVLV. One can recognise a DHHC domain in the interval 75–125; that stretch reads RKCDKCFAYKPLRTHHCRVCRRCVLKMDHHCLWINNCVGYANYKAFFILVF. The active-site S-palmitoyl cysteine intermediate is C105. A run of 2 helical transmembrane segments spans residues 119-139 and 164-184; these read AFFI…VLLV and IFMI…IYLI.

This sequence belongs to the DHHC palmitoyltransferase family.

It is found in the endoplasmic reticulum membrane. The protein localises to the cytoplasmic vesicle membrane. It carries out the reaction L-cysteinyl-[protein] + hexadecanoyl-CoA = S-hexadecanoyl-L-cysteinyl-[protein] + CoA. Its function is as follows. Palmitoyl acyltransferase. The protein is Probable protein S-acyltransferase 15 (PAT15) of Arabidopsis thaliana (Mouse-ear cress).